Consider the following 79-residue polypeptide: Biotin synthase auxiliary protein (79 aa).

The protein belongs to the BsaP family. It depends on iron-sulfur cluster as a cofactor.

Required for the activity of the biotin synthase BioB. The protein is Biotin synthase auxiliary protein of Mycobacterium bovis (strain ATCC BAA-935 / AF2122/97).